The chain runs to 360 residues: 3-dehydroquinate synthase (360 aa).

Residues 104–108 (GVIGD), 128–129 (TT), Lys-141, and 168–171 (FLDT) each bind NAD(+). 3 residues coordinate Zn(2+): Glu-183, His-243, and His-260.

This sequence belongs to the sugar phosphate cyclases superfamily. Dehydroquinate synthase family. Co(2+) is required as a cofactor. Zn(2+) serves as cofactor. The cofactor is NAD(+).

The protein localises to the cytoplasm. It catalyses the reaction 7-phospho-2-dehydro-3-deoxy-D-arabino-heptonate = 3-dehydroquinate + phosphate. Its pathway is metabolic intermediate biosynthesis; chorismate biosynthesis; chorismate from D-erythrose 4-phosphate and phosphoenolpyruvate: step 2/7. Its function is as follows. Catalyzes the conversion of 3-deoxy-D-arabino-heptulosonate 7-phosphate (DAHP) to dehydroquinate (DHQ). This is 3-dehydroquinate synthase from Streptococcus equi subsp. equi (strain 4047).